A 374-amino-acid chain; its full sequence is Probable ethanolamine kinase (374 aa).

The ATP site is built by arginine 93 and aspartate 252.

It belongs to the choline/ethanolamine kinase family.

The enzyme catalyses ethanolamine + ATP = phosphoethanolamine + ADP + H(+). It participates in phospholipid metabolism; phosphatidylethanolamine biosynthesis; phosphatidylethanolamine from ethanolamine: step 1/3. Functionally, involved in phospholipid biosynthesis. Catalyzes the first step in phosphatidylethanolamine biosynthesis. The protein is Probable ethanolamine kinase (EMB1187) of Arabidopsis thaliana (Mouse-ear cress).